A 566-amino-acid polypeptide reads, in one-letter code: Type IV pilus assembly ATPase PilB (566 aa).

326 to 333 is a binding site for ATP; it reads GPTGSGKT. Residues cysteine 459, cysteine 462, cysteine 494, and cysteine 497 each coordinate Zn(2+).

The protein belongs to the GSP E family. In terms of assembly, homohexamer. Interacts with PilC. Interacts with FimX; this interaction positively regulates T4P assembly and twitching motility by promoting the activity of the PilB ATPase.

It localises to the cytoplasm. Its function is as follows. ATPase component of the type IV pilus (T4P) that plays a role in surface and host cell adhesion, colonization, biofilm maturation, virulence, and twitching, a form of surface-associated motility facilitated by cycles of extension, adhesion, and retraction of T4P fibers. Acts as a molecular motor to provide the energy that is required for biogenesis of the pilus and the extrusion of substrates generated in the cytoplasm. PilB ATPase activity is also essential for T4P extension while antagonist PilT ATPase activity is required for T4P retraction. The sequence is that of Type IV pilus assembly ATPase PilB (pilB) from Pseudomonas aeruginosa (strain ATCC 15692 / DSM 22644 / CIP 104116 / JCM 14847 / LMG 12228 / 1C / PRS 101 / PAO1).